Consider the following 184-residue polypeptide: NADH dehydrogenase [ubiquinone] 1 alpha subcomplex assembly factor 3 (184 aa).

Belongs to the NDUFAF3 family. In terms of assembly, interacts with NDUFAF4, NDUFS2 and NDUFS3.

The protein resides in the nucleus. It is found in the mitochondrion inner membrane. Its function is as follows. Essential factor for the assembly of mitochondrial NADH:ubiquinone oxidoreductase complex (complex I). The sequence is that of NADH dehydrogenase [ubiquinone] 1 alpha subcomplex assembly factor 3 (NDUFAF3) from Homo sapiens (Human).